The chain runs to 324 residues: 4-diphosphocytidyl-2-C-methyl-D-erythritol kinase (324 aa).

The active site involves Lys-11. Residue 108–118 (PIGAGLAGGST) participates in ATP binding. Residue Asp-150 is part of the active site.

It belongs to the GHMP kinase family. IspE subfamily.

It carries out the reaction 4-CDP-2-C-methyl-D-erythritol + ATP = 4-CDP-2-C-methyl-D-erythritol 2-phosphate + ADP + H(+). The protein operates within isoprenoid biosynthesis; isopentenyl diphosphate biosynthesis via DXP pathway; isopentenyl diphosphate from 1-deoxy-D-xylulose 5-phosphate: step 3/6. In terms of biological role, catalyzes the phosphorylation of the position 2 hydroxy group of 4-diphosphocytidyl-2C-methyl-D-erythritol. In Cyanothece sp. (strain PCC 7425 / ATCC 29141), this protein is 4-diphosphocytidyl-2-C-methyl-D-erythritol kinase.